The following is a 295-amino-acid chain: Urease accessory protein UreD (295 aa).

Belongs to the UreD family. In terms of assembly, ureD, UreF and UreG form a complex that acts as a GTP-hydrolysis-dependent molecular chaperone, activating the urease apoprotein by helping to assemble the nickel containing metallocenter of UreC. The UreE protein probably delivers the nickel.

The protein localises to the cytoplasm. Functionally, required for maturation of urease via the functional incorporation of the urease nickel metallocenter. The chain is Urease accessory protein UreD from Ralstonia nicotianae (strain ATCC BAA-1114 / GMI1000) (Ralstonia solanacearum).